A 924-amino-acid chain; its full sequence is Ubiquitin carboxyl-terminal hydrolase 5 (924 aa).

The DUSP domain maps to 15–145 (LSPEEERVFI…GPTLARRVIS (131 aa)). A compositionally biased stretch (polar residues) spans 64–83 (TNDGSSLSEHCDSPGSSTLK). Positions 64 to 87 (TNDGSSLSEHCDSPGSSTLKKPSR) are disordered. The 600-residue stretch at 317-916 (TGLLNLGNTC…AAYVLFYRRK (600 aa)) folds into the USP domain. The active-site Nucleophile is the Cys-326. Over residues 648–667 (REESVGKKGNSDSSIPERRS) the composition is skewed to basic and acidic residues. Positions 648–690 (REESVGKKGNSDSSIPERRSARFNNTEEEDKVGGLKKAKKSNS) are disordered. Residue His-874 is the Proton acceptor of the active site.

The protein belongs to the peptidase C19 family.

The enzyme catalyses Thiol-dependent hydrolysis of ester, thioester, amide, peptide and isopeptide bonds formed by the C-terminal Gly of ubiquitin (a 76-residue protein attached to proteins as an intracellular targeting signal).. Recognizes and hydrolyzes the peptide bond at the C-terminal Gly of ubiquitin. Involved in the processing of poly-ubiquitin precursors as well as that of ubiquitinated proteins. This chain is Ubiquitin carboxyl-terminal hydrolase 5 (UBP5), found in Arabidopsis thaliana (Mouse-ear cress).